A 156-amino-acid polypeptide reads, in one-letter code: ATP synthase subunit b (156 aa).

A helical transmembrane segment spans residues 11–31 (AIAFVLFVIFCMKYVWPPIMA).

This sequence belongs to the ATPase B chain family. F-type ATPases have 2 components, F(1) - the catalytic core - and F(0) - the membrane proton channel. F(1) has five subunits: alpha(3), beta(3), gamma(1), delta(1), epsilon(1). F(0) has three main subunits: a(1), b(2) and c(10-14). The alpha and beta chains form an alternating ring which encloses part of the gamma chain. F(1) is attached to F(0) by a central stalk formed by the gamma and epsilon chains, while a peripheral stalk is formed by the delta and b chains.

It is found in the cell inner membrane. Functionally, f(1)F(0) ATP synthase produces ATP from ADP in the presence of a proton or sodium gradient. F-type ATPases consist of two structural domains, F(1) containing the extramembraneous catalytic core and F(0) containing the membrane proton channel, linked together by a central stalk and a peripheral stalk. During catalysis, ATP synthesis in the catalytic domain of F(1) is coupled via a rotary mechanism of the central stalk subunits to proton translocation. Component of the F(0) channel, it forms part of the peripheral stalk, linking F(1) to F(0). The protein is ATP synthase subunit b of Yersinia pseudotuberculosis serotype O:1b (strain IP 31758).